The sequence spans 809 residues: MVMAHFVENFWGEKNNGFDVLYHNMKHGQISTKELADFVRERATIEEAYSRSMTKLAKSASNYSQLGTFAPMWDVFKTSTEKLANCHLDLVRKLQELIKEVQKYGEEQVKSHKKTKEEVAGTLEAVQAIQNITQALQKSKENYTAKCVEQERLKKEGATQREIEKAAVKSKKATDTYKLYVEKYALTKADFEQKMTETAQKFQDIEETHLIHIKEIIGSLSNAVKEIHLQIGQVHEEFINNMANTTIESLIQKFAESKGTGKERPGLIEFEECDPASAVEGIKPRKRKTFALPGIIKKEKDAESVECPDADSLNIPDVDEEGFSIKPEANQNDTKENHFYSSSDSDSEDEEPKRYRIEIKPAHPNNLHHTMASLDELKVSIGNITLSPAVSRHSPVQMNRNSSNEELTKSKPSSLPTEKGTNDLLAWDPLFGSSLESSSAPLTSSSSARPTTPLSLGTLVPPPRPASRPKLASGKLSGINEIPRPFSPPVTSNTSPPPTAPLARAESSSSISSSASLSAANTPTVGVSRGPSPVSLGNQDTLPVAIALTESVNAYFKGADPTKCIVKITGDVTISFPSGIIKVFTSNPSPAVLCFRVKNISRLEQILPNSQLVFSDPSQCDSNTKDFWMNMQAVTIYLKKLSEQNPAASYYNVDVLKYQVSSNGIQSTPLNLATYWKCSASTTDLRVDYKYNPEAMVAPSVLSNIQVVVPVDGGVTNMQSLPPAIWNAEQMKAFWKLSGISEKSDSGGSGSLRAKFDLSEGPSKPTTLAVQFLSEGNTLSGVDIELVGTGYRLSLVKKRFATGRYLADC.

An F-BAR domain is found at 3 to 250 (MAHFVENFWG…NMANTTIESL (248 aa)). Residues 3–274 (MAHFVENFWG…PGLIEFEECD (272 aa)) form a mediates dimerization and binding to membranes enriched in Pi(4,5)-P2 and induces their tubulation region. Positions 87–156 (HLDLVRKLQE…CVEQERLKKE (70 aa)) form a coiled coil. Lys-297 is covalently cross-linked (Glycyl lysine isopeptide (Lys-Gly) (interchain with G-Cter in SUMO2)). The interval 301–352 (DAESVECPDADSLNIPDVDEEGFSIKPEANQNDTKENHFYSSSDSDSEDEEP) is disordered. Ser-312 bears the Phosphoserine mark. Thr-385 is subject to Phosphothreonine. 4 positions are modified to phosphoserine: Ser-387, Ser-394, Ser-402, and Ser-403. A compositionally biased stretch (polar residues) spans 390–416 (VSRHSPVQMNRNSSNEELTKSKPSSLP). Disordered regions lie at residues 390–422 (VSRHSPVQMNRNSSNEELTKSKPSSLPTEKGTN) and 435–536 (LESS…PVSL). Positions 435–456 (LESSSAPLTSSSSARPTTPLSL) are enriched in low complexity. Residues Ser-487, Ser-492, Ser-495, Ser-507, Ser-509, Ser-510, and Ser-532 each carry the phosphoserine modification. A compositionally biased stretch (low complexity) spans 501 to 520 (PLARAESSSSISSSASLSAA). The tract at residues 520-809 (ANTPTVGVSR…FATGRYLADC (290 aa)) is mediates interaction with DAB2, EPS15, EPS15R and ITSN1. One can recognise an MHD domain in the interval 541–808 (TLPVAIALTE…RFATGRYLAD (268 aa)).

The protein belongs to the FCHO family. In terms of assembly, homodimer; disulfide-linked. May form homotetramer. Interacts with AP2A1. Interacts with EPS15, EPS15R, ITSN1 and ITSN2; recruit those scaffolding proteins which in turn may interact with the adaptor protein complex AP-2 at the plasma membrane. Interacts with DAB2 (via DPF motifs); mediates LDL receptor/LDLR endocytosis. Post-translationally, ubiquitinated. Mainly undergoes monoubiquitination but also polyubiquitination. Ubiquitously expressed (at protein level).

It is found in the membrane. The protein resides in the clathrin-coated pit. Functionally, functions in an early step of clathrin-mediated endocytosis. Has both a membrane binding/bending activity and the ability to recruit proteins essential to the formation of functional clathrin-coated pits. Has a lipid-binding activity with a preference for membranes enriched in phosphatidylserine and phosphoinositides (Pi(4,5) biphosphate) like the plasma membrane. Its membrane-bending activity might be important for the subsequent action of clathrin and adaptors in the formation of clathrin-coated vesicles. Involved in adaptor protein complex AP-2-dependent endocytosis of the transferrin receptor, it also functions in the AP-2-independent endocytosis of the LDL receptor. The sequence is that of F-BAR domain only protein 2 (Fcho2) from Mus musculus (Mouse).